Consider the following 226-residue polypeptide: MTHPQQPHGPLRSFGRLKSRPVKPRQQALLDTLLPQIAVPTAPFQPRDLMPEAQEVWLEIGFGGGEHMAAQAGKRPDVLMIGAEPFVNGVASAVRHVEEQALKNVRIHEGDARDVVGWLPDASIDRLFIMFPDPWHKARHNKRRLVQPAFVAELARVLKPGAGFRFATDWADYAQWTVERVLADPAFRFADAEAVRNAPPADHVTTRYEEKKLGDCAPVFLDFVRI.

The disordered stretch occupies residues 1–21; that stretch reads MTHPQQPHGPLRSFGRLKSRP. The S-adenosyl-L-methionine site is built by Glu-59, Glu-84, Asp-111, and Asp-133. Asp-133 is an active-site residue. Lys-137 is a binding site for substrate. The segment at 139–144 is interaction with RNA; sequence RHNKRR. Residues Asp-169 and 206–209 contribute to the substrate site; that span reads TRYE.

Belongs to the class I-like SAM-binding methyltransferase superfamily. TrmB family.

The catalysed reaction is guanosine(46) in tRNA + S-adenosyl-L-methionine = N(7)-methylguanosine(46) in tRNA + S-adenosyl-L-homocysteine. Its pathway is tRNA modification; N(7)-methylguanine-tRNA biosynthesis. Its function is as follows. Catalyzes the formation of N(7)-methylguanine at position 46 (m7G46) in tRNA. The polypeptide is tRNA (guanine-N(7)-)-methyltransferase (Caulobacter sp. (strain K31)).